Here is a 143-residue protein sequence, read N- to C-terminus: MRILVQRVTSARVIVGGDVVGAIEPETQGLLALVGVTHDDDHMKARRLAEKLWSLRILDDEKSASDIGAPILVVSQFTLYGNTTKGRRPTWNAAAPGPVAEPLVSDFAAALESLGATVQTGVFGADMQVELVNDGPVTVLLEL.

Positions Gly135–Pro136 match the Gly-cisPro motif, important for rejection of L-amino acids motif.

This sequence belongs to the DTD family. Homodimer.

It is found in the cytoplasm. It carries out the reaction glycyl-tRNA(Ala) + H2O = tRNA(Ala) + glycine + H(+). It catalyses the reaction a D-aminoacyl-tRNA + H2O = a tRNA + a D-alpha-amino acid + H(+). Its function is as follows. An aminoacyl-tRNA editing enzyme that deacylates mischarged D-aminoacyl-tRNAs. Also deacylates mischarged glycyl-tRNA(Ala), protecting cells against glycine mischarging by AlaRS. Acts via tRNA-based rather than protein-based catalysis; rejects L-amino acids rather than detecting D-amino acids in the active site. By recycling D-aminoacyl-tRNA to D-amino acids and free tRNA molecules, this enzyme counteracts the toxicity associated with the formation of D-aminoacyl-tRNA entities in vivo and helps enforce protein L-homochirality. The chain is D-aminoacyl-tRNA deacylase from Mycolicibacterium gilvum (strain PYR-GCK) (Mycobacterium gilvum (strain PYR-GCK)).